The chain runs to 191 residues: Peptidyl-tRNA hydrolase (191 aa).

Residue tyrosine 15 coordinates tRNA. The Proton acceptor role is filled by histidine 20. Phenylalanine 66, asparagine 68, and asparagine 114 together coordinate tRNA.

The protein belongs to the PTH family. Monomer.

The protein resides in the cytoplasm. The enzyme catalyses an N-acyl-L-alpha-aminoacyl-tRNA + H2O = an N-acyl-L-amino acid + a tRNA + H(+). In terms of biological role, hydrolyzes ribosome-free peptidyl-tRNAs (with 1 or more amino acids incorporated), which drop off the ribosome during protein synthesis, or as a result of ribosome stalling. Catalyzes the release of premature peptidyl moieties from peptidyl-tRNA molecules trapped in stalled 50S ribosomal subunits, and thus maintains levels of free tRNAs and 50S ribosomes. The protein is Peptidyl-tRNA hydrolase of Streptococcus agalactiae serotype III (strain NEM316).